We begin with the raw amino-acid sequence, 244 residues long: Small ribosomal subunit protein uS2 (244 aa).

It belongs to the universal ribosomal protein uS2 family.

This chain is Small ribosomal subunit protein uS2, found in Exiguobacterium sibiricum (strain DSM 17290 / CCUG 55495 / CIP 109462 / JCM 13490 / 255-15).